The sequence spans 207 residues: Large ribosomal subunit protein uL4 (207 aa).

The segment at 49–78 (HAVKNRSAVSGGGRKPWRQKGTGRARQGSI) is disordered.

Belongs to the universal ribosomal protein uL4 family. As to quaternary structure, part of the 50S ribosomal subunit.

Functionally, one of the primary rRNA binding proteins, this protein initially binds near the 5'-end of the 23S rRNA. It is important during the early stages of 50S assembly. It makes multiple contacts with different domains of the 23S rRNA in the assembled 50S subunit and ribosome. Forms part of the polypeptide exit tunnel. The polypeptide is Large ribosomal subunit protein uL4 (rplD) (Streptococcus pyogenes serotype M1).